A 289-amino-acid chain; its full sequence is 33 kDa chaperonin (289 aa).

2 disulfides stabilise this stretch: C235-C237 and C268-C271.

The protein belongs to the HSP33 family. Under oxidizing conditions two disulfide bonds are formed involving the reactive cysteines. Under reducing conditions zinc is bound to the reactive cysteines and the protein is inactive.

The protein resides in the cytoplasm. Functionally, redox regulated molecular chaperone. Protects both thermally unfolding and oxidatively damaged proteins from irreversible aggregation. Plays an important role in the bacterial defense system toward oxidative stress. The chain is 33 kDa chaperonin from Bacillus licheniformis (strain ATCC 14580 / DSM 13 / JCM 2505 / CCUG 7422 / NBRC 12200 / NCIMB 9375 / NCTC 10341 / NRRL NRS-1264 / Gibson 46).